The chain runs to 1529 residues: ABC multidrug transporter AFR2 (1529 aa).

Residues 144–394 form the ABC transporter 1 domain; that stretch reads GSLRDLIGNR…FVDMGFHCPS (251 aa). N-linked (GlcNAc...) asparagine glycans are attached at residues asparagine 235 and asparagine 318. The next 5 helical transmembrane spans lie at 510–530, 539–559, 589–609, 614–634, and 648–668; these read LFGNFIMALIIGSVFYNLPVT, ALLFFAILMSAFGSALEILIL, IPYKVMNCIIFNLTLYFMTNL, GAYFFFMLISFTLTMVMSMLF, and LAPAALLILGLVMYTGFAVNV. An N-linked (GlcNAc...) asparagine glycan is attached at asparagine 742. Residues 757-777 traverse the membrane as a helical segment; the sequence is GILIGFFLFFTAIYLTATEFI. The region spanning 845–1087 is the ABC transporter 2 domain; that stretch reads FSWKDVVYDI…ILIDYFEKNG (243 aa). 881–888 contacts ATP; it reads GVSGAGKT. Helical transmembrane passes span 1193 to 1213, 1229 to 1249, 1268 to 1288, 1314 to 1334, and 1353 to 1373; these read YIWAKVALCSLSGLFIGFSFF, VFMMFTIFGQLTQQIMPNFVT, IFILSNIVSEIPWAILMGVII, LMFLYIEMFLLFNATFSIMIV, and MCLIFCGVLASGSSLPGFWVF. Asparagine 1434 is a glycosylation site (N-linked (GlcNAc...) asparagine). The chain crosses the membrane as a helical span at residues 1465-1485; sequence FGLLWVYVVFNVIAAIGIYWL. The span at 1493–1505 shows a compositional bias: basic and acidic residues; the sequence is GKERASEPEDVQE. The interval 1493–1529 is disordered; the sequence is GKERASEPEDVQEKQVPAQSTEKKYQSISRSSESTVA. Residues 1518 to 1529 are compositionally biased toward polar residues; sequence QSISRSSESTVA.

This sequence belongs to the ABC transporter superfamily. ABCG family. PDR (TC 3.A.1.205) subfamily.

The protein localises to the cell membrane. The enzyme catalyses itraconazole(in) + ATP + H2O = itraconazole(out) + ADP + phosphate + H(+). It catalyses the reaction voriconazole(in) + ATP + H2O = voriconazole(out) + ADP + phosphate + H(+). The catalysed reaction is fluconazole(in) + ATP + H2O = fluconazole(out) + ADP + phosphate + H(+). Its function is as follows. Pleiotropic ABC efflux transporter that confers resistance to structurally and functionally unrelated compounds including azoles such as fluconazole (FLC), itraconazole (ITC), posaconazole (POS), and voriconazole (VRC). The sequence is that of ABC multidrug transporter AFR2 from Cryptococcus deuterogattii (strain R265) (Cryptococcus gattii VGII (strain R265)).